A 374-amino-acid chain; its full sequence is Dual-specificity RNA methyltransferase RlmN (374 aa).

The active-site Proton acceptor is the E91. The region spanning 97-340 (EDDRGTLCIS…TTVRKTRGDD (244 aa)) is the Radical SAM core domain. A disulfide bridge connects residues C104 and C345. [4Fe-4S] cluster-binding residues include C111, C115, and C118. Residues 165-166 (GE), S197, 219-221 (SLH), and N302 each bind S-adenosyl-L-methionine. The active-site S-methylcysteine intermediate is C345.

This sequence belongs to the radical SAM superfamily. RlmN family. [4Fe-4S] cluster serves as cofactor.

Its subcellular location is the cytoplasm. It catalyses the reaction adenosine(2503) in 23S rRNA + 2 reduced [2Fe-2S]-[ferredoxin] + 2 S-adenosyl-L-methionine = 2-methyladenosine(2503) in 23S rRNA + 5'-deoxyadenosine + L-methionine + 2 oxidized [2Fe-2S]-[ferredoxin] + S-adenosyl-L-homocysteine. The enzyme catalyses adenosine(37) in tRNA + 2 reduced [2Fe-2S]-[ferredoxin] + 2 S-adenosyl-L-methionine = 2-methyladenosine(37) in tRNA + 5'-deoxyadenosine + L-methionine + 2 oxidized [2Fe-2S]-[ferredoxin] + S-adenosyl-L-homocysteine. In terms of biological role, specifically methylates position 2 of adenine 2503 in 23S rRNA and position 2 of adenine 37 in tRNAs. m2A2503 modification seems to play a crucial role in the proofreading step occurring at the peptidyl transferase center and thus would serve to optimize ribosomal fidelity. The polypeptide is Dual-specificity RNA methyltransferase RlmN (Acidovorax sp. (strain JS42)).